A 436-amino-acid polypeptide reads, in one-letter code: AMSH-like protease (436 aa).

Met-1 bears the N-acetylmethionine mark. Phosphoserine is present on residues Ser-25 and Ser-242. The MPN domain maps to 269 to 397 (VVLPEDLCHK…IFRLTNAGML (129 aa)). His-347, His-349, Asp-360, His-362, Cys-402, His-408, and His-410 together coordinate Zn(2+). Residues 347-360 (HTHPTQTAFLSSVD) carry the JAMM motif motif.

The protein belongs to the peptidase M67C family. It depends on Zn(2+) as a cofactor. Ubiquitously expressed.

With respect to regulation, inhibited by UbV(SP.1), an ubiquitin variant that also inhibits STAMBP. Functionally, zinc metalloprotease that specifically cleaves 'Lys-63'-linked polyubiquitin chains. Acts as a positive regulator of the TORC1 signaling pathway by mediating 'Lys-63'-linked deubiquitination of SESN2, thereby inhibiting SESN2-interaction with the GATOR2 complex. Does not cleave 'Lys-48'-linked polyubiquitin chains. In Homo sapiens (Human), this protein is AMSH-like protease.